Here is a 255-residue protein sequence, read N- to C-terminus: Type III pantothenate kinase (255 aa).

Asp-6–Glu-13 serves as a coordination point for ATP. Residues Tyr-100 and Gly-107–Arg-110 each bind substrate. Catalysis depends on Asp-109, which acts as the Proton acceptor. Asp-129 contacts K(+). Residue Thr-132 participates in ATP binding. Position 184 (Thr-184) interacts with substrate.

The protein belongs to the type III pantothenate kinase family. In terms of assembly, homodimer. NH4(+) serves as cofactor. Requires K(+) as cofactor.

The protein resides in the cytoplasm. It carries out the reaction (R)-pantothenate + ATP = (R)-4'-phosphopantothenate + ADP + H(+). Its pathway is cofactor biosynthesis; coenzyme A biosynthesis; CoA from (R)-pantothenate: step 1/5. Its function is as follows. Catalyzes the phosphorylation of pantothenate (Pan), the first step in CoA biosynthesis. This is Type III pantothenate kinase from Persephonella marina (strain DSM 14350 / EX-H1).